The sequence spans 1206 residues: Phosphoglucan, water dikinase, chloroplastic (1206 aa).

2 disordered regions span residues 1-20 (MTSL…PRRG) and 52-71 (RSAA…DSSK). The transit peptide at 1–56 (MTSLRPLETSLSIGGRPRRGLVLPPPGVGAGVLLRRGAMALPGRRGFACRGRSAAS) directs the protein to the chloroplast. Residues 67 to 168 (RDSSKQPLVH…KFDIVCHWNR (102 aa)) enclose the CBM20 domain. His-776 acts as the Tele-phosphohistidine intermediate in catalysis.

This sequence belongs to the PEP-utilizing enzyme family. Homodimer. It depends on Mg(2+) as a cofactor.

It is found in the plastid. The protein localises to the chloroplast. It carries out the reaction [(1-&gt;4)-6-phospho-alpha-D-glucosyl](n) + n ATP + n H2O = [(1-&gt;4)-3,6-bisphospho-alpha-D-glucosyl](n) + n AMP + n phosphate + 2n H(+). In terms of biological role, mediates the incorporation of phosphate into starch-like phospho-alpha-glucan, mostly at the C-3 position of glucose units. May be required for starch degradation, suggesting that the phosphate content of starch regulates its degradability. This chain is Phosphoglucan, water dikinase, chloroplastic (GWD3), found in Oryza sativa subsp. japonica (Rice).